A 463-amino-acid polypeptide reads, in one-letter code: Protein MRG3-like (463 aa).

Residues 54–74 (WVLSTGIVSFIAFNIWWVYWP) traverse the membrane as a helical segment. TPR repeat units follow at residues 84-118 (KILRKGLHSEIKKEGANYQKSLEYYLEALEECKAE), 128-161 (TGIEIKIGEMYEKLHMYNDATALYGDMLKKFYNE), 358-389 (ELIRSRLQENQNSCLQYSADCYKSIISFANEN), and 409-442 (SLAHYGIGVINLHKGRLRASKKELKKAIRISEMI).

The protein belongs to the MGR3 family.

It localises to the membrane. The polypeptide is Protein MRG3-like (Saccharomyces cerevisiae (strain ATCC 204508 / S288c) (Baker's yeast)).